Consider the following 300-residue polypeptide: uncharacterized protein (300 aa).

This is an uncharacterized protein from Methanocaldococcus jannaschii (strain ATCC 43067 / DSM 2661 / JAL-1 / JCM 10045 / NBRC 100440) (Methanococcus jannaschii).